The chain runs to 94 residues: Co-chaperonin GroES (94 aa).

It belongs to the GroES chaperonin family. In terms of assembly, heptamer of 7 subunits arranged in a ring. Interacts with the chaperonin GroEL.

The protein resides in the cytoplasm. Its function is as follows. Together with the chaperonin GroEL, plays an essential role in assisting protein folding. The GroEL-GroES system forms a nano-cage that allows encapsulation of the non-native substrate proteins and provides a physical environment optimized to promote and accelerate protein folding. GroES binds to the apical surface of the GroEL ring, thereby capping the opening of the GroEL channel. In Desulfitobacterium hafniense (strain DSM 10664 / DCB-2), this protein is Co-chaperonin GroES.